A 168-amino-acid polypeptide reads, in one-letter code: Acetolactate synthase small subunit (168 aa).

The ACT domain occupies Thr-7–Glu-82.

This sequence belongs to the acetolactate synthase small subunit family. Dimer of large and small chains.

The enzyme catalyses 2 pyruvate + H(+) = (2S)-2-acetolactate + CO2. It functions in the pathway amino-acid biosynthesis; L-isoleucine biosynthesis; L-isoleucine from 2-oxobutanoate: step 1/4. Its pathway is amino-acid biosynthesis; L-valine biosynthesis; L-valine from pyruvate: step 1/4. The sequence is that of Acetolactate synthase small subunit (ilvH) from Mycobacterium bovis (strain ATCC BAA-935 / AF2122/97).